Here is a 698-residue protein sequence, read N- to C-terminus: Probable threonine--tRNA ligase 2, cytoplasmic (698 aa).

The TGS domain maps to 38–100; the sequence is GGGNIKLNDG…EMSGKDYNIE (63 aa). Residues 541–560 are disordered; the sequence is NNNNNNNNNNEEINDNNNNN.

It belongs to the class-II aminoacyl-tRNA synthetase family.

It is found in the cytoplasm. The catalysed reaction is tRNA(Thr) + L-threonine + ATP = L-threonyl-tRNA(Thr) + AMP + diphosphate + H(+). The polypeptide is Probable threonine--tRNA ligase 2, cytoplasmic (thrS2) (Dictyostelium discoideum (Social amoeba)).